The sequence spans 297 residues: Coiled-coil domain-containing protein 159 (297 aa).

Positions 147 to 297 (EELELVREEV…SKSGRSFPPA (151 aa)) form a coiled coil. Residues 256–297 (LRGHKGHQCLSPPLPSWDSDSDCDQDLSQPPFSKSGRSFPPA) form a disordered region.

Interacts with DYNLT2. Interacts with GGNBP1. Interacts with OSBP2.

In terms of biological role, functions during spermatid development; may participate in the centrosome reduction procedure of spermatids and is required for the formation of the connecting piece/sperm head-tail coupling apparatus (HTCA) and the correct and tight attachment of the flagellum to the nuclear envelope. The protein is Coiled-coil domain-containing protein 159 (CCDC159) of Homo sapiens (Human).